The primary structure comprises 166 residues: NAD(P)H-quinone oxidoreductase subunit I, chloroplastic (166 aa).

4Fe-4S ferredoxin-type domains lie at 55 to 84 (GRIH…VDWK) and 95 to 124 (LNYS…MTEE). Positions 64, 67, 70, 74, 104, 107, 110, and 114 each coordinate [4Fe-4S] cluster.

The protein belongs to the complex I 23 kDa subunit family. NDH is composed of at least 16 different subunits, 5 of which are encoded in the nucleus. [4Fe-4S] cluster serves as cofactor.

The protein resides in the plastid. The protein localises to the chloroplast thylakoid membrane. It carries out the reaction a plastoquinone + NADH + (n+1) H(+)(in) = a plastoquinol + NAD(+) + n H(+)(out). It catalyses the reaction a plastoquinone + NADPH + (n+1) H(+)(in) = a plastoquinol + NADP(+) + n H(+)(out). In terms of biological role, NDH shuttles electrons from NAD(P)H:plastoquinone, via FMN and iron-sulfur (Fe-S) centers, to quinones in the photosynthetic chain and possibly in a chloroplast respiratory chain. The immediate electron acceptor for the enzyme in this species is believed to be plastoquinone. Couples the redox reaction to proton translocation, and thus conserves the redox energy in a proton gradient. The sequence is that of NAD(P)H-quinone oxidoreductase subunit I, chloroplastic from Tridax balbisioides (Coatbuttons).